The primary structure comprises 455 residues: MFS-type transporter SLC18B1 (455 aa).

M1 carries the post-translational modification N-acetylmethionine. Positions 1–26 (MDTAGPPAPAGTEGDGPGGSTGETSR) are disordered. Residues 1-32 (MDTAGPPAPAGTEGDGPGGSTGETSRRLSKEQ) are Cytoplasmic-facing. A Phosphoserine modification is found at S20. Residues 33 to 53 (IFVLVSAASMNLGCMMTYSIL) form a helical membrane-spanning segment. The Extracellular segment spans residues 54–69 (GPFFPKEAEKKGASNT). Residues 70–90 (TIGMIFGCYALFELLASLVFG) traverse the membrane as a helical segment. Residues 91–99 (KYLVHIGAK) are Cytoplasmic-facing. Residues 100–120 (FMFIAGMFVSGGVTILFGVLD) traverse the membrane as a helical segment. Residues 121 to 126 (QLPEGP) lie on the Extracellular side of the membrane. A helical membrane pass occupies residues 127–147 (IFIAMCFLVRIVDAIGFGAAI). The Cytoplasmic segment spans residues 148 to 166 (TASSSILAKAFPNNVATVM). The chain crosses the membrane as a helical span at residues 167 to 187 (GSLEVFSGLGLVAGPPLGGLL). Residues 188–194 (YQSFGYE) are Extracellular-facing. Residues 195–215 (VPFIFLGCIVLLMIPLNLCIL) form a helical membrane-spanning segment. Topologically, residues 216-232 (PSYESDAGKQSFWKLVT) are cytoplasmic. A helical membrane pass occupies residues 233–253 (LPKIGLIAFVIISLSSCFGFL). Residues 254 to 271 (DPTLSLFVMKKFSLSTGY) lie on the Extracellular side of the membrane. The helical transmembrane segment at 272–292 (VGLVFLGLSLSYAISSPLFGL) threads the bilayer. Residues 293–303 (LSDKMPNLRKW) are Cytoplasmic-facing. A helical membrane pass occupies residues 304–324 (FLVFGNLITAGCYMLLGPIPL). Over 325–330 (LHIKSQ) the chain is Extracellular. A helical membrane pass occupies residues 331 to 351 (LWLLVLVLVINGVSAGMSIIP). The Cytoplasmic segment spans residues 352-376 (TFPEMLSCAYANGFEDGISTLGLVS). The helical transmembrane segment at 377-397 (GLFGAMWSVGAFMGPILGGFL) threads the bilayer. Over 398 to 406 (CEKIGFEWA) the chain is Extracellular. Residues 407 to 427 (AAIQGLWTLLSGVAMALFYLW) traverse the membrane as a helical segment. Over 428-455 (EDSTMRRSKAQNILGTEEEQAALLPNDT) the chain is Cytoplasmic.

As to expression, expressed in brain structures, particularly in hippocampus, cortex, and cerebellum (at protein level). Expressed in astrocytes and hippocampal neurons (at protein level). Expressed in peritoneal mast cells.

The protein localises to the cytoplasmic vesicle. It localises to the secretory vesicle membrane. It is found in the secretory vesicle. The protein resides in the synaptic vesicle membrane. It catalyses the reaction spermine(in) + n H(+)(out) = spermine(out) + n H(+)(in). The catalysed reaction is spermidine(in) + n H(+)(out) = spermidine(out) + n H(+)(in). It carries out the reaction serotonin(in) + n H(+)(out) = serotonin(out) + n H(+)(in). In terms of biological role, proton-coupled polyamine antiporter involved in the translocation of polyamines from cytosol into secretory vesicles prior to their release via exocytosis. Uses the electrochemical proton gradient generated by a V-type proton-pumping ATPase to couple the efflux of protons with the uptake of a polyamine molecule. Facilitates vesicular storage of spermine and spermidine in astrocytes with an impact on glutamatergic neuronal transmission and memory formation. Upon antigen stimulation, regulates polyamine accumulation and release in mast cell secretory granules, which in turn potentiates mast cell degranulation and histamine secretion. This is MFS-type transporter SLC18B1 from Rattus norvegicus (Rat).